Consider the following 235-residue polypeptide: N-alpha-acetyltransferase 10 (235 aa).

N-acetylmethionine is present on methionine 1. Residues 1–58 form an interaction with NAA15 region; sequence MNIRNARPEDLMNMQHCNLLCLPENYQMKYYFYHGLSWPQLSYIAEDENGKIVGYVLA. The N-acetyltransferase domain occupies 1–152; it reads MNIRNARPED…DAYAMKRDLT (152 aa). Lysine 136 bears the N6-acetyllysine; by autocatalysis mark. The interval 178-235 is disordered; that stretch reads NKVESKGNSPPSSGEACREEKGLAAEDSGGDSKDLSEVSETTESTDVKDSSEASDSAS. Phosphoserine occurs at positions 182, 186, and 205. Residues 193–213 show a composition bias toward basic and acidic residues; that stretch reads ACREEKGLAAEDSGGDSKDLS. Serine 209 is modified (phosphoserine; by IKKB). Phosphoserine occurs at positions 213 and 216.

Belongs to the acetyltransferase family. ARD1 subfamily. As to quaternary structure, component of the N-terminal acetyltransferase A complex (also called the NatA complex) composed of NAA10 and NAA15. Within the complex interacts with NAA15. Component of the N-terminal acetyltransferase A (NatA)/HYPK complex at least composed of NAA10, NAA15 and HYPK, which has N-terminal acetyltransferase activity. In complex with NAA15, interacts with HYPK. Component of the N-terminal acetyltransferase E (NatE) complex at least composed of NAA10, NAA15 and NAA50. Within the complex interacts with NAA15; the interaction is required for binding to NAAT50. Interacts with NAAT50. The interaction of the NatA complex with NAA50 reduces the acetylation activity of the NatA complex. Component of the N-terminal acetyltransferase E (NatE)/HYPK complex at least composed of NAA10, NAA15, NAA50 and HYPK. In complex with NAA15, interacts with HYPK; the interaction with HYPK reduces the capacity of the NatA complex to interact with NAA50. Interacts with HIF1A (via its ODD domain); the interaction increases HIF1A protein stability during normoxia, an down-regulates it when induced by hypoxia. Interacts with the ribosome. Binds to MYLK. Interacts with NAA16. Interacts (via its C-terminal domain) with TSC2, leading to its acetylation. Interacts with IKBKB. Interacts with HSPA1A and HSPA1B leading to its acetylation. Cleaved by caspases during apoptosis. Post-translationally, phosphorylation by IKBKB/IKKB at Ser-209 promotes its proteasome-mediated degradation. In terms of processing, autoacetylated at Lys-136 which stimulates its catalytic activity. As to expression, ubiquitous.

It is found in the cytoplasm. The protein localises to the nucleus. The enzyme catalyses N-terminal glycyl-[protein] + acetyl-CoA = N-terminal N(alpha)-acetylglycyl-[protein] + CoA + H(+). The catalysed reaction is N-terminal L-alanyl-[protein] + acetyl-CoA = N-terminal N(alpha)-acetyl-L-alanyl-[protein] + CoA + H(+). It catalyses the reaction N-terminal L-seryl-[protein] + acetyl-CoA = N-terminal N(alpha)-acetyl-L-seryl-[protein] + CoA + H(+). It carries out the reaction N-terminal L-valyl-[protein] + acetyl-CoA = N-terminal N(alpha)-acetyl-L-valyl-[protein] + CoA + H(+). The enzyme catalyses N-terminal L-cysteinyl-[protein] + acetyl-CoA = N-terminal N(alpha)-acetyl-L-cysteinyl-[protein] + CoA + H(+). The catalysed reaction is N-terminal L-threonyl-[protein] + acetyl-CoA = N-terminal N(alpha)-acetyl-L-threonyl-[protein] + CoA + H(+). Catalytic subunit of N-terminal acetyltransferase complexes which display alpha (N-terminal) acetyltransferase activity. Acetylates amino termini that are devoid of initiator methionine. The alpha (N-terminal) acetyltransferase activity may be important for vascular, hematopoietic and neuronal growth and development. Without NAA15, displays epsilon (internal) acetyltransferase activity towards HIF1A, thereby promoting its degradation. Represses MYLK kinase activity by acetylation, and thus represses tumor cell migration. Acetylates, and stabilizes TSC2, thereby repressing mTOR activity and suppressing cancer development. Acetylates HSPA1A and HSPA1B at 'Lys-77' which enhances its chaperone activity and leads to preferential binding to co-chaperone HOPX. Acetylates HIST1H4A. Acts as a negative regulator of sister chromatid cohesion during mitosis. This is N-alpha-acetyltransferase 10 (NAA10) from Homo sapiens (Human).